Reading from the N-terminus, the 393-residue chain is Acetylornithine aminotransferase 1 (393 aa).

Position 131 (arginine 131) interacts with N(2)-acetyl-L-ornithine. 215 to 218 (DEVQ) is a binding site for pyridoxal 5'-phosphate. Residue lysine 244 is modified to N6-(pyridoxal phosphate)lysine. Residue threonine 272 coordinates N(2)-acetyl-L-ornithine. Pyridoxal 5'-phosphate is bound at residue threonine 273.

The protein belongs to the class-III pyridoxal-phosphate-dependent aminotransferase family. ArgD subfamily. As to quaternary structure, homodimer. The cofactor is pyridoxal 5'-phosphate.

It is found in the cytoplasm. The catalysed reaction is N(2)-acetyl-L-ornithine + 2-oxoglutarate = N-acetyl-L-glutamate 5-semialdehyde + L-glutamate. Its pathway is amino-acid biosynthesis; L-arginine biosynthesis; N(2)-acetyl-L-ornithine from L-glutamate: step 4/4. In Bordetella pertussis (strain Tohama I / ATCC BAA-589 / NCTC 13251), this protein is Acetylornithine aminotransferase 1.